A 400-amino-acid polypeptide reads, in one-letter code: Envelope glycoprotein M (400 aa).

Residues 1–16 (MRASKSDRFLMSSWVK) lie on the Intravirion side of the membrane. The helical transmembrane segment at 17 to 37 (LLFVAVIMYICSAVVPMAATY) threads the bilayer. Residues 38–76 (EGLGFPCYFNNLVNYSALNLTVRNSAKHLTPTLFLEKPE) lie on the Virion surface side of the membrane. A helical membrane pass occupies residues 77–97 (MLVYIFWTFIVDGIAIVYYCL). The Intravirion segment spans residues 98-113 (AAVAVYRAKHVHATTM). Residues 114 to 134 (MSMQSWIALLGSHSVLYVAIL) traverse the membrane as a helical segment. Residues 135–152 (RMWSMQLFIHVLSYKHVL) are Virion surface-facing. The chain crosses the membrane as a helical span at residues 153 to 173 (MAAFVYCIHFCISFAHIQSLI). Residues 174 to 208 (TCNSAQWEIPLLEQHVPDNTMMESLLTRWKPVCVN) lie on the Intravirion side of the membrane. The chain crosses the membrane as a helical span at residues 209–229 (LYLSTTALEMLLFSLSTMMAV). The Virion surface segment spans residues 230 to 234 (GNSFY). Residues 235-255 (VLVSDAIFGAVNMFLALTVVW) form a helical membrane-spanning segment. Residues 256–270 (YINTEFFLVKFMRRQ) lie on the Intravirion side of the membrane. Residues 271–291 (VGFYVGVFVGYLILLLPVIRY) form a helical membrane-spanning segment. Residues 292–300 (ENAFVQANL) are Virion surface-facing. The helical transmembrane segment at 301–321 (HYIVAINISCIPILCILAIVI) threads the bilayer. At 322–400 (RVIRSDWGLC…EIDETQMIFI (79 aa)) the chain is on the intravirion side. A disordered region spans residues 348-394 (DRTPTVHQKPPPLPAKTRARAKVKDISTPAPRTQYQSDHESDSEIDE).

This sequence belongs to the herpesviridae glycoprotein M family. In terms of assembly, interacts (via N-terminus) with gN (via N-terminus). The gM-gN heterodimer forms the gCII complex. N-glycosylated.

It is found in the virion membrane. Its subcellular location is the host Golgi apparatus. The protein resides in the host trans-Golgi network. The protein localises to the host endosome membrane. It localises to the host nucleus inner membrane. In terms of biological role, envelope glycoprotein important for virion assembly and egress. Plays a role in the correct incorporation of gH-gL into virion membrane. Directs the glycoprotein N (gN) to the host trans-Golgi network. This is Envelope glycoprotein M from Homo sapiens (Human).